Here is a 330-residue protein sequence, read N- to C-terminus: Probable inactive heme oxygenase 2, chloroplastic (330 aa).

Low complexity-rich tracts occupy residues 1–13 and 56–69; these read MPLAAAVAASAVV and AAEAEAEAVAVDEA. Disordered stretches follow at residues 1-27, 50-82, and 107-156; these read MPLAAAVAASAVVPPRPPPPPPRRARP, PSPPAPAAEAEAEAVAVDEAPPAKPRPRRYPRQ, and TTLK…LEGE. The N-terminal 47 residues, 1–47, are a transit peptide targeting the chloroplast; it reads MPLAAAVAASAVVPPRPPPPPPRRARPLRSFTGLILTRDLAALTVAR. Residues 114–151 are compositionally biased toward acidic residues; the sequence is TGAEEEVGDGVSEDASASEEEEEEEDDDDVVEEEEEGA.

This sequence belongs to the heme oxygenase family.

The protein resides in the plastid. It localises to the chloroplast. Probable inactive heme oxygenase that may play a role in the regulation of phytochrome assembly and photomorphogenesis. The chain is Probable inactive heme oxygenase 2, chloroplastic (HO2) from Oryza sativa subsp. japonica (Rice).